The following is a 182-amino-acid chain: Troponin I, fast skeletal muscle (182 aa).

The residue at position 2 (Gly2) is an N-acetylglycine. Residues 2–48 (GDEEKRNRAITARRQHLKSVMLQIAATELEKEESRRESEKQNYLSEH) are involved in binding TNC. Thr12 is subject to Phosphothreonine. Residues 29 to 41 (ELEKEESRRESEK) are compositionally biased toward basic and acidic residues. Residues 29–53 (ELEKEESRRESEKQNYLSEHCPPLH) form a disordered region. Positions 97–117 (NQKLFDLRGKFKRPPLRRVRM) are involved in binding TNC and actin. A Phosphoserine modification is found at Ser118.

This sequence belongs to the troponin I family. As to quaternary structure, binds to actin and tropomyosin.

In terms of biological role, troponin I is the inhibitory subunit of troponin, the thin filament regulatory complex which confers calcium-sensitivity to striated muscle actomyosin ATPase activity. The polypeptide is Troponin I, fast skeletal muscle (Tnni2) (Rattus norvegicus (Rat)).